The chain runs to 247 residues: Ribosomal RNA large subunit methyltransferase E (247 aa).

Positions methionine 1–tyrosine 21 are disordered. Residues glycine 88, tryptophan 90, aspartate 111, aspartate 127, and aspartate 151 each contribute to the S-adenosyl-L-methionine site. The active-site Proton acceptor is lysine 191.

This sequence belongs to the class I-like SAM-binding methyltransferase superfamily. RNA methyltransferase RlmE family.

The protein localises to the cytoplasm. It catalyses the reaction uridine(2552) in 23S rRNA + S-adenosyl-L-methionine = 2'-O-methyluridine(2552) in 23S rRNA + S-adenosyl-L-homocysteine + H(+). Specifically methylates the uridine in position 2552 of 23S rRNA at the 2'-O position of the ribose in the fully assembled 50S ribosomal subunit. The polypeptide is Ribosomal RNA large subunit methyltransferase E (Bartonella henselae (strain ATCC 49882 / DSM 28221 / CCUG 30454 / Houston 1) (Rochalimaea henselae)).